The following is a 477-amino-acid chain: Glycogen synthase 1 (477 aa).

Position 15 (Lys15) interacts with ADP-alpha-D-glucose.

Belongs to the glycosyltransferase 1 family. Bacterial/plant glycogen synthase subfamily.

The catalysed reaction is [(1-&gt;4)-alpha-D-glucosyl](n) + ADP-alpha-D-glucose = [(1-&gt;4)-alpha-D-glucosyl](n+1) + ADP + H(+). Its pathway is glycan biosynthesis; glycogen biosynthesis. Functionally, synthesizes alpha-1,4-glucan chains using ADP-glucose. This chain is Glycogen synthase 1 (glgA1), found in Synechocystis sp. (strain ATCC 27184 / PCC 6803 / Kazusa).